The primary structure comprises 130 residues: Small ribosomal subunit protein uS8 (130 aa).

It belongs to the universal ribosomal protein uS8 family. As to quaternary structure, part of the 30S ribosomal subunit.

One of the primary rRNA binding proteins, it binds directly to 16S rRNA central domain where it helps coordinate assembly of the platform of the 30S subunit. This is Small ribosomal subunit protein uS8 from Methanococcus maripaludis (strain C5 / ATCC BAA-1333).